We begin with the raw amino-acid sequence, 237 residues long: ATP-dependent dethiobiotin synthetase BioD (237 aa).

Residue 21–26 (GVGKTV) coordinates ATP. Residue Thr25 coordinates Mg(2+). The active site involves Lys48. Position 52 (Thr52) interacts with substrate. ATP is bound by residues Asp56, 117–120 (EALG), 177–178 (SC), and 209–211 (PYL). Residues Asp56 and Glu117 each contribute to the Mg(2+) site.

Belongs to the dethiobiotin synthetase family. As to quaternary structure, homodimer. It depends on Mg(2+) as a cofactor.

Its subcellular location is the cytoplasm. It carries out the reaction (7R,8S)-7,8-diammoniononanoate + CO2 + ATP = (4R,5S)-dethiobiotin + ADP + phosphate + 3 H(+). The catalysed reaction is (7R,8S)-8-amino-7-(carboxyamino)nonanoate + ATP = (4R,5S)-dethiobiotin + ADP + phosphate + H(+). It participates in cofactor biosynthesis; biotin biosynthesis; biotin from 7,8-diaminononanoate: step 1/2. Catalyzes a mechanistically unusual reaction, the ATP-dependent insertion of CO2 between the N7 and N8 nitrogen atoms of 7,8-diaminopelargonic acid (DAPA, also called 7,8-diammoniononanoate) to form a ureido ring. This cyanobacterium does not encode bioA (which catalyzes the formation of the precursor for this reaction in the cannonical pathway), instead it encodes bioU, which replaces bioA and also performs the first half of the cannonical BioD reaction. Thus in this bacteria BioD has a different substrate. In Synechocystis replacement of bioU by bioA from E.coli leads to biotin synthesis, showing BioD can use the 'cannonical' 7,8-diammoniononanoate as a substrate. The polypeptide is ATP-dependent dethiobiotin synthetase BioD (Synechocystis sp. (strain ATCC 27184 / PCC 6803 / Kazusa)).